Reading from the N-terminus, the 513-residue chain is ATP synthase subunit alpha (513 aa).

171–178 contacts ATP; it reads GDRQIGKT.

Belongs to the ATPase alpha/beta chains family. F-type ATPases have 2 components, CF(1) - the catalytic core - and CF(0) - the membrane proton channel. CF(1) has five subunits: alpha(3), beta(3), gamma(1), delta(1), epsilon(1). CF(0) has three main subunits: a(1), b(2) and c(9-12). The alpha and beta chains form an alternating ring which encloses part of the gamma chain. CF(1) is attached to CF(0) by a central stalk formed by the gamma and epsilon chains, while a peripheral stalk is formed by the delta and b chains.

It localises to the cell membrane. It catalyses the reaction ATP + H2O + 4 H(+)(in) = ADP + phosphate + 5 H(+)(out). Its function is as follows. Produces ATP from ADP in the presence of a proton gradient across the membrane. The alpha chain is a regulatory subunit. This is ATP synthase subunit alpha from Wolbachia pipientis wMel.